The primary structure comprises 124 residues: MAEITVELVSVERMLWSGQASIVTAQTTEGEIGVLPDHEPMLGQLVENGVVTIQPTDGDRLVAGVQGGFLSVSKEKVTILADFAVWAHEVDSASAEADLNSDDELAKARAEAGLRAVRRSSEGL.

Belongs to the ATPase epsilon chain family. In terms of assembly, F-type ATPases have 2 components, CF(1) - the catalytic core - and CF(0) - the membrane proton channel. CF(1) has five subunits: alpha(3), beta(3), gamma(1), delta(1), epsilon(1). CF(0) has three main subunits: a, b and c.

It localises to the cell membrane. In terms of biological role, produces ATP from ADP in the presence of a proton gradient across the membrane. This Corynebacterium efficiens (strain DSM 44549 / YS-314 / AJ 12310 / JCM 11189 / NBRC 100395) protein is ATP synthase epsilon chain.